A 537-amino-acid chain; its full sequence is Multidrug resistance protein Stp (537 aa).

14 consecutive transmembrane segments (helical) span residues 6–26 (LLTL…ALIV), 46–66 (WVVA…ATLA), 77–97 (IGVS…SIAV), 104–124 (AQGL…SAAF), 136–156 (IWTA…GLLV), 163–183 (SIFY…LCYV), 200–220 (LLFI…PQIG), 223–243 (SVQT…FVWL), 262–282 (YALA…MLLL), 300–320 (LMIL…GHLV), 327–347 (VPIL…IFSE), 352–372 (ALVL…LTPI), 397–417 (AIGS…WLSA), and 478–498 (VALL…WRWF).

Belongs to the major facilitator superfamily. EmrB family.

The protein localises to the cell membrane. The protein is Multidrug resistance protein Stp (stp) of Mycobacterium tuberculosis (strain CDC 1551 / Oshkosh).